A 196-amino-acid polypeptide reads, in one-letter code: dTTP/UTP pyrophosphatase (196 aa).

Residue aspartate 72 is the Proton acceptor of the active site.

This sequence belongs to the Maf family. YhdE subfamily. A divalent metal cation is required as a cofactor.

The protein resides in the cytoplasm. It carries out the reaction dTTP + H2O = dTMP + diphosphate + H(+). It catalyses the reaction UTP + H2O = UMP + diphosphate + H(+). Nucleoside triphosphate pyrophosphatase that hydrolyzes dTTP and UTP. May have a dual role in cell division arrest and in preventing the incorporation of modified nucleotides into cellular nucleic acids. The protein is dTTP/UTP pyrophosphatase of Chlamydia trachomatis serovar A (strain ATCC VR-571B / DSM 19440 / HAR-13).